We begin with the raw amino-acid sequence, 898 residues long: Alanine--tRNA ligase (898 aa).

Residues His589, His593, Cys693, and His697 each coordinate Zn(2+).

Belongs to the class-II aminoacyl-tRNA synthetase family. The cofactor is Zn(2+).

The protein localises to the cytoplasm. It catalyses the reaction tRNA(Ala) + L-alanine + ATP = L-alanyl-tRNA(Ala) + AMP + diphosphate. Functionally, catalyzes the attachment of alanine to tRNA(Ala) in a two-step reaction: alanine is first activated by ATP to form Ala-AMP and then transferred to the acceptor end of tRNA(Ala). Also edits incorrectly charged Ser-tRNA(Ala) and Gly-tRNA(Ala) via its editing domain. The polypeptide is Alanine--tRNA ligase (Methanothermobacter thermautotrophicus (strain ATCC 29096 / DSM 1053 / JCM 10044 / NBRC 100330 / Delta H) (Methanobacterium thermoautotrophicum)).